Reading from the N-terminus, the 350-residue chain is MLEEALAAIQNARDLEELKALKARYLGKKGLLTQEMKGLSALPLEERRKRGQELNAIKAALEAALEAREKALEEAALKEALERERVDVSLPGASLFSGGLHPITLMERELVEIFRALGYQAVEGPEVESEFFNFDALNIPEHHPARDMWDTFWLAGEGFRLEGPLGEEVEGRLLLRTHTSPMQVRYMVAHTPPFRIVVPGRVFRFEQTDATHEAVFHQLEGLVVGEGITMAHLKGAIYELAQALFGPDSKVRFQPVYFPFVEPGAQFAVWWPEGGKWLELGGAGMVHPKVFQAVDAYRERLGLPSAYRGVTGFAFGLGVERLAMLRYGIPDIRYFFGGRLKFLEQFKGVL.

Glu-262 contacts Mg(2+).

This sequence belongs to the class-II aminoacyl-tRNA synthetase family. Phe-tRNA synthetase alpha subunit type 1 subfamily. As to quaternary structure, tetramer of two alpha and two beta subunits. Mg(2+) serves as cofactor.

The protein localises to the cytoplasm. It catalyses the reaction tRNA(Phe) + L-phenylalanine + ATP = L-phenylalanyl-tRNA(Phe) + AMP + diphosphate + H(+). In Thermus thermophilus (strain ATCC BAA-163 / DSM 7039 / HB27), this protein is Phenylalanine--tRNA ligase alpha subunit.